The chain runs to 427 residues: Serine--tRNA ligase (427 aa).

232–234 (TAE) contacts L-serine. 263 to 265 (RSE) is an ATP binding site. Glu-286 is an L-serine binding site. Residue 350-353 (EISS) coordinates ATP. Ser-385 contacts L-serine.

Belongs to the class-II aminoacyl-tRNA synthetase family. Type-1 seryl-tRNA synthetase subfamily. As to quaternary structure, homodimer. The tRNA molecule binds across the dimer.

It is found in the cytoplasm. It carries out the reaction tRNA(Ser) + L-serine + ATP = L-seryl-tRNA(Ser) + AMP + diphosphate + H(+). The catalysed reaction is tRNA(Sec) + L-serine + ATP = L-seryl-tRNA(Sec) + AMP + diphosphate + H(+). The protein operates within aminoacyl-tRNA biosynthesis; selenocysteinyl-tRNA(Sec) biosynthesis; L-seryl-tRNA(Sec) from L-serine and tRNA(Sec): step 1/1. In terms of biological role, catalyzes the attachment of serine to tRNA(Ser). Is also able to aminoacylate tRNA(Sec) with serine, to form the misacylated tRNA L-seryl-tRNA(Sec), which will be further converted into selenocysteinyl-tRNA(Sec). This Aromatoleum aromaticum (strain DSM 19018 / LMG 30748 / EbN1) (Azoarcus sp. (strain EbN1)) protein is Serine--tRNA ligase.